The primary structure comprises 663 residues: MAAKEKLEAVLNVALRVPSIMLLDVLYRWDVSSFFQQIQRSSLNNNPLFQYKYLALNMHYVGYILSVVLLTLPRQHLVQLYLYFVTALLLYAGHQISRDYVRSELESAYEGPMYLEPLSMNRFTTALIGQLVVCTLCSCVMKTKQIWLFSAHMLPLLARLCLVPLETIVIINKFAMIFTGLEVLYFLGSNLLVPYNLAKSAYRELVQVVEVYGLLALGMSLWNQLVVPVLFMVFWLVLFALQIYSYFSTRDQPASRERLLFLFLTSIAECCSTPYSLLGLVFTVSFVALGVLTLCKFYLQGYRAFMNDPAMNRGMTEGVTLLILAVQTGLIELQVVHRAFLLSIILFIVVASILQSMLEIADPIVLALGASRDKSLWKHFRAVSLCLFLLVFPAYMAYMICQFFHMDFWLLIIISSSILTSLQVLGTLFIYVLFMVEEFRKEPVENMDDVIYYVNGTYRLLEFVVALCVVAYGVSETIFGEWTVMGSMIIFIHSYYNVWLRAQLGWKSFLLRRDAVNKIKSLPVATQEQLEKHNDICAICYQDMKSAVITPCSHFFHAGCLKKWLYVQDTCPLCHCHLKNSSQLPGLGTEAAPQPPAGAEQNIVLQEGPEPPDHESPPGTGTQEGSGDSSEHINRGSASQEGAADAGEGPQIPEGEVCPVESA.

Transmembrane regions (helical) follow at residues 53-73 (YLALNMHYVGYILSVVLLTLP), 77-97 (LVQLYLYFVTALLLYAGHQIS), 123-143 (FTTALIGQLVVCTLCSCVMKT), 146-166 (IWLFSAHMLPLLARLCLVPLE), 168-188 (IVIINKFAMIFTGLEVLYFLG), 205-222 (LVQVVEVYGLLALGMSLW), 225-245 (LVVPVLFMVFWLVLFALQIYS), 275-295 (YSLLGLVFTVSFVALGVLTLC), 316-336 (TEGVTLLILAVQTGLIELQVV), 340-360 (FLLSIILFIVVASILQSMLEI), 384-404 (SLCLFLLVFPAYMAYMICQFF), 410-430 (LLIIISSSILTSLQVLGTLFI), 460-480 (LLEFVVALCVVAYGVSETIFG), and 482-502 (WTVMGSMIIFIHSYYNVWLRA). Residues 81–84 (YLYF) carry the YLYF motif motif. Residue Cys-537 is part of the active site. The segment at 537-575 (CAICYQDMKSAVITPCSHFFHAGCLKKWLYVQDTCPLCH) adopts an RING-type; atypical zinc-finger fold. Residues 587–663 (LGTEAAPQPP…EGEVCPVESA (77 aa)) form a disordered region. The segment covering 619–628 (GTGTQEGSGD) has biased composition (polar residues).

Interacts (via YLYF motif) with INSIG1 and INSIG2.

The protein localises to the endoplasmic reticulum membrane. It catalyses the reaction S-ubiquitinyl-[E2 ubiquitin-conjugating enzyme]-L-cysteine + [acceptor protein]-L-lysine = [E2 ubiquitin-conjugating enzyme]-L-cysteine + N(6)-ubiquitinyl-[acceptor protein]-L-lysine.. In terms of biological role, E3 ubiquitin ligase that catalyzes the direct transfer of ubiquitin from E2 ubiquitin-conjugating enzyme to a specific substrate. In response to bacterial infection, negatively regulates the phagocyte oxidative burst by controlling the turnover of the NADPH oxidase complex subunits. Promotes monoubiquitination of CYBA and 'Lys-48'-linked polyubiquitination and degradation of CYBB NADPH oxidase catalytic subunits, both essential for the generation of antimicrobial reactive oxygen species. Involved in the maintenance of cholesterol homeostasis. In response to high sterol concentrations ubiquitinates HMGCR, a rate-limiting enzyme in cholesterol biosynthesis, and targets it for degradation. The interaction with INSIG1 is required for this function. In addition, triggers ubiquitination of SCAP, likely inhibiting its transport to the Golgi apparatus and the subsequent processing/maturation of SREBPF2, ultimately down-regulating cholesterol biosynthesis. The chain is RING finger protein 145 from Mus musculus (Mouse).